Here is a 147-residue protein sequence, read N- to C-terminus: Ribosomal RNA large subunit methyltransferase H (147 aa).

Residues leucine 64, glycine 96, and 115–120 (FSKMTF) each bind S-adenosyl-L-methionine.

It belongs to the RNA methyltransferase RlmH family. In terms of assembly, homodimer.

The protein localises to the cytoplasm. It catalyses the reaction pseudouridine(1915) in 23S rRNA + S-adenosyl-L-methionine = N(3)-methylpseudouridine(1915) in 23S rRNA + S-adenosyl-L-homocysteine + H(+). Specifically methylates the pseudouridine at position 1915 (m3Psi1915) in 23S rRNA. The polypeptide is Ribosomal RNA large subunit methyltransferase H (Acholeplasma laidlawii (strain PG-8A)).